Consider the following 740-residue polypeptide: Leucine-rich repeat neuronal protein 4 (740 aa).

The signal sequence occupies residues 1 to 18 (MRQTLPLLLLTVLRPSWA). Residues 19–679 (DPPQEKVPLF…PCAAFTTKPS (661 aa)) lie on the Extracellular side of the membrane. A glycan (N-linked (GlcNAc...) asparagine) is linked at N42. LRR repeat units follow at residues 51-74 (LPAA…GCLP), 75-97 (RTLR…ELGH), 98-123 (LEQL…GPAG), 125-144 (HTLD…TGPA), 145-168 (LSSL…AFAC), 174-197 (LLNL…AFAG), 203-226 (LVTL…WIRD), 228-251 (PKLT…IFKM), 253-276 (PNLQ…IFQD), and 277-300 (TPHL…TLDS). A glycan (N-linked (GlcNAc...) asparagine) is linked at N176. Residues N289, N379, and N442 are each glycosylated (N-linked (GlcNAc...) asparagine). The tract at residues 389–517 (VAPSAAPATR…QAPNPSLSEG (129 aa)) is disordered. 2 stretches are compositionally biased toward polar residues: residues 430-454 (APST…STTR) and 490-514 (WDRS…NPSL). The Fibronectin type-III domain maps to 579-679 (IPDPPRLQGV…PCAAFTTKPS (101 aa)). N-linked (GlcNAc...) asparagine glycosylation is present at N622. The helical transmembrane segment at 680–700 (FALLLSGLCAASGLLLASTVV) threads the bilayer. The Cytoplasmic segment spans residues 701-740 (LSACLCRRGQTLGLQRCDTHLVAYKNPAFDDYPLGLQTVS).

The protein localises to the membrane. In terms of biological role, may play an important role in hippocampus-dependent long-lasting memory. The sequence is that of Leucine-rich repeat neuronal protein 4 (LRRN4) from Homo sapiens (Human).